Consider the following 255-residue polypeptide: MFKLNFKNNYKVLTLLFSLTLSMFVSNAQVYYPGYLNNVSSISTVSADYFPLLVHNPPLTNSTTYSFNEAINLLDTVTDPIFNATQIQALLNTWASNVKAVIGLSLPIYVTQLNRINRIDLLSIQMYTETNSAFILSATTYAPLKPQGVSILNQVNAIKASLNGITLTTTQQAQLTQFNAAISKIQLSVSNSHLITFGANDVIPFNSDSLSYMEYIADDILTLDDAIDIIKQNNVRILNYIYDLYSTHKTLSLNF.

The signal sequence occupies residues 1–28 (MFKLNFKNNYKVLTLLFSLTLSMFVSNA). 3 N-linked (GlcNAc...) asparagine glycosylation sites follow: asparagine 38, asparagine 61, and asparagine 83.

It is found in the secreted. This is an uncharacterized protein from Dictyostelium discoideum (Social amoeba).